The primary structure comprises 146 residues: Large ribosomal subunit protein bL9 (146 aa).

The protein belongs to the bacterial ribosomal protein bL9 family. Part of the 50S ribosomal subunit. Contacts protein L31.

Binds to the 23S rRNA and protein L31. In Deinococcus radiodurans (strain ATCC 13939 / DSM 20539 / JCM 16871 / CCUG 27074 / LMG 4051 / NBRC 15346 / NCIMB 9279 / VKM B-1422 / R1), this protein is Large ribosomal subunit protein bL9 (rplI).